The primary structure comprises 531 residues: Splicing factor ESS-2 (531 aa).

Disordered stretches follow at residues 104–163 (RTPI…RKKK) and 453–531 (PFAS…GDFF). The span at 105 to 114 (TPITTRSTTE) shows a compositional bias: polar residues. Low complexity-rich tracts occupy residues 125-136 (TPGPSSASTSSA) and 464-477 (SRPS…TPGS). Positions 480–498 (SRGSTTPGSSWSQGAQTPG) are enriched in polar residues.

Belongs to the ESS2 family.

It localises to the nucleus. Its function is as follows. Regulates pre-mRNA splicing. This Caenorhabditis elegans protein is Splicing factor ESS-2 (ess-2).